The following is a 445-amino-acid chain: N-succinylarginine dihydrolase (445 aa).

Substrate contacts are provided by residues 19–28, N110, and 137–138; these read AGLSFGNVAS and HR. E174 is a catalytic residue. R214 lines the substrate pocket. H250 is a catalytic residue. 2 residues coordinate substrate: D252 and N363. C369 (nucleophile) is an active-site residue.

The protein belongs to the succinylarginine dihydrolase family. As to quaternary structure, homodimer.

It carries out the reaction N(2)-succinyl-L-arginine + 2 H2O + 2 H(+) = N(2)-succinyl-L-ornithine + 2 NH4(+) + CO2. The protein operates within amino-acid degradation; L-arginine degradation via AST pathway; L-glutamate and succinate from L-arginine: step 2/5. Catalyzes the hydrolysis of N(2)-succinylarginine into N(2)-succinylornithine, ammonia and CO(2). The sequence is that of N-succinylarginine dihydrolase from Shewanella piezotolerans (strain WP3 / JCM 13877).